The chain runs to 472 residues: Eukaryotic translation initiation factor 2 subunit 3 (472 aa).

An N-acetylalanine modification is found at Ala2. A Phosphoserine modification is found at Ser16. One can recognise a tr-type G domain in the interval 39-248 (QATINIGTIG…IVKKIPVPPR (210 aa)). The segment at 48 to 55 (GHVAHGKS) is G1. 51–56 (AHGKST) is a binding site for GTP. The interval 76–80 (NITIK) is G2. Positions 134-137 (DCPG) are G3. GTP contacts are provided by residues 190–193 (NKID) and 225–227 (SAQ). The tract at residues 190 to 193 (NKID) is G4. The segment at 225-227 (SAQ) is G5. The tract at residues 457–469 (GQIRRGVTIKPTV) is interacts with CDC123.

The protein belongs to the TRAFAC class translation factor GTPase superfamily. Classic translation factor GTPase family. EIF2G subfamily. In terms of assembly, eukaryotic translation initiation factor 2 eIF2 is a heterotrimeric complex composed of an alpha (EIF2S1), a beta (EIF2S2) and a gamma (EIF2S3) chain. eIF2 is member of the 43S pre-initiation complex (43S PIC). Interacts (via C-terminus) with CDC123; the interaction is direct.

It is found in the cytoplasm. The protein localises to the cytosol. The catalysed reaction is GTP + H2O = GDP + phosphate + H(+). Member of the eIF2 complex that functions in the early steps of protein synthesis by forming a ternary complex with GTP and initiator tRNA. This complex binds to a 40S ribosomal subunit, followed by mRNA binding to form the 43S pre-initiation complex (43S PIC). Junction of the 60S ribosomal subunit to form the 80S initiation complex is preceded by hydrolysis of the GTP bound to eIF2 and release of an eIF2-GDP binary complex. In order for eIF2 to recycle and catalyze another round of initiation, the GDP bound to eIF2 must exchange with GTP by way of a reaction catalyzed by eIF-2B. This Sus scrofa (Pig) protein is Eukaryotic translation initiation factor 2 subunit 3 (EIF2S3).